A 487-amino-acid chain; its full sequence is MTSLDQFVTAVIASPSQYTELDRIYVHNRVLGLVGEGDPIAASDDQLTSLTDALVKTAIQNGKIEATQSDEDILADQLMDLVTPLPSVLNQRFWDKYQVSPQTATDYFFNLSKANDYIKTRAIAKNVVFPAKTPFGDLEITINLSKPEKDPKAIAAARNQPQDGYPLCQLCMQNEGYLGRLGYPARSNHRIIRLTLGGNTWGFQYSPYAYFNEHSIFLDQEHRPMVINRQTFTNLLEIVQQFPHYFVGSNADLPIVGGSMLSHEHYQGGRHEFPMMKAPIARTIDLGIAGVKAGIVKWPMSTIRLTSQDLVALTDAAVKIHETWKNYSDESVDVRAYTDGTRHHTTTPIARKVGDDYVLDIVLRDNQTSAEFPDGIFHPHQDVQHIKKENIGLIEVMGRAILPARLKTELAEVGKYLLDQPNQMVAMHQAWAAQLKATNTITADNVTTVIDTAVGNVFARVLADAGVFKWDDAGEAAFDRFVAAMHD.

This sequence belongs to the galactose-1-phosphate uridylyltransferase type 2 family.

It is found in the cytoplasm. The enzyme catalyses alpha-D-galactose 1-phosphate + UDP-alpha-D-glucose = alpha-D-glucose 1-phosphate + UDP-alpha-D-galactose. The protein operates within carbohydrate metabolism; galactose metabolism. In Lactiplantibacillus plantarum (strain ATCC BAA-793 / NCIMB 8826 / WCFS1) (Lactobacillus plantarum), this protein is Galactose-1-phosphate uridylyltransferase.